An 898-amino-acid chain; its full sequence is Vacuolar protein sorting-associated protein 41 homolog (898 aa).

Residues Met-1–Glu-10 show a composition bias toward basic and acidic residues. A disordered region spans residues Met-1–Glu-35. A CHCR repeat occupies Leu-614–Gln-756. The RING-type; atypical zinc finger occupies Cys-835–Ser-890.

It belongs to the VPS41 family. Probable component of the homotypic fusion and vacuole protein sorting (HOPS) complex consisting of the core class C Vps proteins vps-11, vps-16, vps-18, and which further associates with vps-33.1, vps-39 and vps-41.

The protein localises to the endosome membrane. The protein resides in the late endosome. It localises to the lysosome. Its subcellular location is the golgi apparatus. It is found in the trans-Golgi network. The protein localises to the early endosome. The protein resides in the cytoplasmic vesicle. It localises to the clathrin-coated vesicle. Functionally, plays a role in vesicle-mediated protein trafficking to lysosomal compartments including the endocytic membrane transport pathways. Believed to act in part as a core component of the putative HOPS endosomal tethering complex which is proposed to be involved in the rab-5-to-rab-7 endosome conversion probably implicating sand-1, and via binding SNAREs and SNARE complexes to mediate tethering and docking events during SNARE-mediated membrane fusion. The HOPS complex is proposed to be recruited to rab-7 on the late endosomal membrane and to regulate late endocytic, phagocytic and autophagic traffic towards lysosomes. Within the HOPS complex, contributes to the normal development of gut granules in the adult intestine. May mediate the tethering of autophagosomes with lysosomes. Has a role in the negative regulation of apoptosis. Required for uptake of exogenous dsRNA which is used in experimental RNA silencing. This Caenorhabditis briggsae protein is Vacuolar protein sorting-associated protein 41 homolog.